Here is a 661-residue protein sequence, read N- to C-terminus: Peroxisomal acyl-coenzyme A oxidase 1 (661 aa).

Residue serine 26 is modified to Phosphoserine. An N6-acetyllysine modification is found at lysine 65. At lysine 89 the chain carries N6-succinyllysine. Threonine 139 lines the FAD pocket. Lysine 159 is modified (N6-succinyllysine). Residue glycine 178 coordinates FAD. Lysine 216 is modified (N6-acetyllysine). Residue lysine 241 is modified to N6-succinyllysine. N6-acetyllysine occurs at positions 255, 267, and 272. Lysine 349 is modified (N6-succinyllysine). Catalysis depends on glutamate 421, which acts as the Proton acceptor. An N6-acetyllysine; alternate mark is found at lysine 437 and lysine 446. 2 positions are modified to N6-succinyllysine; alternate: lysine 437 and lysine 446. N6-acetyllysine is present on lysine 500. Lysine 512 carries the post-translational modification N6-acetyllysine; alternate. Lysine 512 carries the N6-succinyllysine; alternate modification. Position 542 is an N6-succinyllysine (lysine 542). Lysine 637 carries the post-translational modification N6-acetyllysine; alternate. Lysine 637 is subject to N6-succinyllysine; alternate. Lysine 643 is modified (N6-succinyllysine). Serine 649 is modified (phosphoserine). Lysine 652 bears the N6-acetyllysine mark. Lysine 655 carries the N6-succinyllysine modification. Positions 659–661 (SKL) match the Microbody targeting signal motif.

Belongs to the acyl-CoA oxidase family. Homodimer. Interacts with LONP2. Requires FAD as cofactor.

It is found in the peroxisome. It catalyses the reaction a 2,3-saturated acyl-CoA + O2 = a (2E)-enoyl-CoA + H2O2. It carries out the reaction hexadecanoyl-CoA + O2 = (2E)-hexadecenoyl-CoA + H2O2. The catalysed reaction is dodecanoyl-CoA + O2 = (2E)-dodecenoyl-CoA + H2O2. The enzyme catalyses octanoyl-CoA + O2 = (2E)-octenoyl-CoA + H2O2. It catalyses the reaction decanoyl-CoA + O2 = (2E)-decenoyl-CoA + H2O2. It carries out the reaction tetradecanoyl-CoA + O2 = (2E)-tetradecenoyl-CoA + H2O2. The catalysed reaction is hexadecanedioyl-CoA + O2 = (2E)-hexadecenedioyl-CoA + H2O2. The enzyme catalyses tetracosanoyl-CoA + O2 = (2E)-tetracosenoyl-CoA + H2O2. It catalyses the reaction glutaryl-CoA + O2 = (2E)-glutaconyl-CoA + H2O2. It carries out the reaction hexanoyl-CoA + O2 = (2E)-hexenoyl-CoA + H2O2. The catalysed reaction is octadecanoyl-CoA + O2 = (2E)-octadecenoyl-CoA + H2O2. The enzyme catalyses (5Z,8Z,11Z,14Z,17Z)-eicosapentaenoyl-CoA + O2 = (2E,5Z,8Z,11Z,14Z,17Z)-icosahexaenoyl-CoA + H2O2. It catalyses the reaction (6Z,9Z,12Z,15Z,18Z,21Z)-tetracosahexaenoyl-CoA + O2 = (2E,6Z,9Z,12Z,15Z,18Z,21Z)-tetracosaheptaenoyl-CoA + H2O2. The protein operates within lipid metabolism; peroxisomal fatty acid beta-oxidation. Its function is as follows. Involved in the initial and rate-limiting step of peroxisomal beta-oxidation of straight-chain saturated and unsaturated very-long-chain fatty acids. Catalyzes the desaturation of fatty acyl-CoAs such as palmitoyl-CoA (hexadecanoyl-CoA) to 2-trans-enoyl-CoAs ((2E)-enoyl-CoAs) such as (2E)-hexadecenoyl-CoA, and donates electrons directly to molecular oxygen (O(2)), thereby producing hydrogen peroxide (H(2)O(2)). This Cavia porcellus (Guinea pig) protein is Peroxisomal acyl-coenzyme A oxidase 1.